A 338-amino-acid polypeptide reads, in one-letter code: Phenylalanine--tRNA ligase alpha subunit (338 aa).

E252 contacts Mg(2+).

It belongs to the class-II aminoacyl-tRNA synthetase family. Phe-tRNA synthetase alpha subunit type 1 subfamily. Tetramer of two alpha and two beta subunits. Requires Mg(2+) as cofactor.

Its subcellular location is the cytoplasm. The catalysed reaction is tRNA(Phe) + L-phenylalanine + ATP = L-phenylalanyl-tRNA(Phe) + AMP + diphosphate + H(+). The polypeptide is Phenylalanine--tRNA ligase alpha subunit (Ectopseudomonas mendocina (strain ymp) (Pseudomonas mendocina)).